The following is a 628-amino-acid chain: Carbon monoxide dehydrogenase 1 (628 aa).

Cys-44, Cys-52, Cys-53, Cys-56, Cys-61, and Cys-75 together coordinate [4Fe-4S] cluster. [Ni-4Fe-5S] cluster is bound by residues His-266, Cys-302, Cys-340, Cys-448, Cys-478, and Cys-519.

This sequence belongs to the Ni-containing carbon monoxide dehydrogenase family. As to quaternary structure, homodimer. Requires [4Fe-4S] cluster as cofactor. It depends on [Ni-4Fe-5S] cluster as a cofactor.

It catalyses the reaction CO + 2 oxidized [2Fe-2S]-[ferredoxin] + H2O = 2 reduced [2Fe-2S]-[ferredoxin] + CO2 + 2 H(+). Its function is as follows. CODH oxidizes carbon monoxide coupled, via CooF, to the reduction of a hydrogen cation by a hydrogenase (possibly CooH). The sequence is that of Carbon monoxide dehydrogenase 1 (cooS1) from Methanosarcina acetivorans (strain ATCC 35395 / DSM 2834 / JCM 12185 / C2A).